The sequence spans 220 residues: Cytidylate kinase (220 aa).

11–19 lines the ATP pocket; sequence GPTASGKGT.

The protein belongs to the cytidylate kinase family. Type 1 subfamily.

Its subcellular location is the cytoplasm. It catalyses the reaction CMP + ATP = CDP + ADP. The enzyme catalyses dCMP + ATP = dCDP + ADP. The chain is Cytidylate kinase from Polynucleobacter asymbioticus (strain DSM 18221 / CIP 109841 / QLW-P1DMWA-1) (Polynucleobacter necessarius subsp. asymbioticus).